The primary structure comprises 186 residues: ATP synthase subunit b, chloroplastic (186 aa).

The helical transmembrane segment at 26–44 threads the bilayer; that stretch reads ILETNLINLGVVIGTLLYF.

Belongs to the ATPase B chain family. As to quaternary structure, F-type ATPases have 2 components, F(1) - the catalytic core - and F(0) - the membrane proton channel. F(1) has five subunits: alpha(3), beta(3), gamma(1), delta(1), epsilon(1). F(0) has four main subunits: a(1), b(1), b'(1) and c(10-14). The alpha and beta chains form an alternating ring which encloses part of the gamma chain. F(1) is attached to F(0) by a central stalk formed by the gamma and epsilon chains, while a peripheral stalk is formed by the delta, b and b' chains.

The protein localises to the plastid. It localises to the chloroplast thylakoid membrane. F(1)F(0) ATP synthase produces ATP from ADP in the presence of a proton or sodium gradient. F-type ATPases consist of two structural domains, F(1) containing the extramembraneous catalytic core and F(0) containing the membrane proton channel, linked together by a central stalk and a peripheral stalk. During catalysis, ATP synthesis in the catalytic domain of F(1) is coupled via a rotary mechanism of the central stalk subunits to proton translocation. In terms of biological role, component of the F(0) channel, it forms part of the peripheral stalk, linking F(1) to F(0). The protein is ATP synthase subunit b, chloroplastic of Chara vulgaris (Common stonewort).